A 504-amino-acid polypeptide reads, in one-letter code: Arabinose import ATP-binding protein AraG (504 aa).

2 consecutive ABC transporter domains span residues 8-243 and 256-499; these read LSFR…MVGR and YGEE…MPKV. 40–47 contributes to the ATP binding site; it reads GENGAGKS.

It belongs to the ABC transporter superfamily. Arabinose importer (TC 3.A.1.2.2) family. The complex is composed of two ATP-binding proteins (AraG), two transmembrane proteins (AraH) and a solute-binding protein (AraF).

Its subcellular location is the cell inner membrane. It catalyses the reaction L-arabinose(out) + ATP + H2O = L-arabinose(in) + ADP + phosphate + H(+). Its function is as follows. Part of the ABC transporter complex AraFGH involved in arabinose import. Responsible for energy coupling to the transport system. The polypeptide is Arabinose import ATP-binding protein AraG (Escherichia coli (strain UTI89 / UPEC)).